The chain runs to 148 residues: UPF0178 protein lpp0103 (148 aa).

It belongs to the UPF0178 family.

The chain is UPF0178 protein lpp0103 from Legionella pneumophila (strain Paris).